The following is a 133-amino-acid chain: MGMTSDSIANLLTRIRNALMAEHLYVDIEHSKMLEAIVRILKQHGFVAHFLVKEENRKRLMRVFLRYGEDRRPVIHALKRVSKPSRRVYVSAAKIPYVFGNMGIAVLSTPQGVLEGSVARAKNVGGELLCLVW.

It belongs to the universal ribosomal protein uS8 family. Part of the 30S ribosomal subunit. Contacts proteins S5 and S12.

Its function is as follows. One of the primary rRNA binding proteins, it binds directly to 16S rRNA central domain where it helps coordinate assembly of the platform of the 30S subunit. This is Small ribosomal subunit protein uS8 from Chlamydia trachomatis serovar A (strain ATCC VR-571B / DSM 19440 / HAR-13).